The primary structure comprises 129 residues: Large ribosomal subunit protein bL12 (129 aa).

The protein belongs to the bacterial ribosomal protein bL12 family. As to quaternary structure, homodimer. Part of the ribosomal stalk of the 50S ribosomal subunit. Forms a multimeric L10(L12)X complex, where L10 forms an elongated spine to which 2 to 4 L12 dimers bind in a sequential fashion. Binds GTP-bound translation factors.

Forms part of the ribosomal stalk which helps the ribosome interact with GTP-bound translation factors. Is thus essential for accurate translation. The chain is Large ribosomal subunit protein bL12 from Fervidobacterium nodosum (strain ATCC 35602 / DSM 5306 / Rt17-B1).